The primary structure comprises 76 residues: Protein CsbA (76 aa).

Topologically, residues 1–5 (MITKA) are extracellular. The helical transmembrane segment at 6-22 (VFALFFPFMLVVLFTRV) threads the bilayer. Topologically, residues 23-27 (TFNHY) are cytoplasmic. Residues 28-44 (VAIALTAALLFASYLKG) form a helical membrane-spanning segment. Over 45-49 (YTETY) the chain is Extracellular. A helical transmembrane segment spans residues 50–66 (FIVGLDVVSLVAGGLYM). The Cytoplasmic segment spans residues 67-76 (AKKAAEKKEE).

It is found in the cell membrane. In Bacillus subtilis (strain 168), this protein is Protein CsbA (csbA).